Reading from the N-terminus, the 84-residue chain is Protein Tlp homolog (84 aa).

The interval 1–20 is disordered; sequence MGKEERYTKKPKPDDRSDNV.

This sequence belongs to the Tlp family.

This is Protein Tlp homolog from Caldanaerobacter subterraneus subsp. tengcongensis (strain DSM 15242 / JCM 11007 / NBRC 100824 / MB4) (Thermoanaerobacter tengcongensis).